A 204-amino-acid polypeptide reads, in one-letter code: Late expression factor 2 (204 aa).

The protein belongs to the baculoviridae LEF-2 family.

In terms of biological role, required for late and very late gene expression. Specifically required for expression from the vp39 and polh promoters. In Anticarsia gemmatalis nuclear polyhedrosis virus (AgMNPV), this protein is Late expression factor 2 (LEF-2).